Consider the following 403-residue polypeptide: Argininosuccinate synthase (403 aa).

10–18 (AYSGGVDTS) serves as a coordination point for ATP. An L-citrulline-binding site is contributed by Tyr89. Gly119 is an ATP binding site. Residues Thr121, Asn125, and Asp126 each contribute to the L-aspartate site. Asn125 provides a ligand contact to L-citrulline. The L-citrulline site is built by Arg129, Ser177, Ser186, Glu262, and Tyr274.

This sequence belongs to the argininosuccinate synthase family. Type 1 subfamily. Homotetramer.

It is found in the cytoplasm. The catalysed reaction is L-citrulline + L-aspartate + ATP = 2-(N(omega)-L-arginino)succinate + AMP + diphosphate + H(+). It participates in amino-acid biosynthesis; L-arginine biosynthesis; L-arginine from L-ornithine and carbamoyl phosphate: step 2/3. The polypeptide is Argininosuccinate synthase (Synechococcus sp. (strain JA-3-3Ab) (Cyanobacteria bacterium Yellowstone A-Prime)).